A 95-amino-acid chain; its full sequence is Co-chaperonin GroES (95 aa).

This sequence belongs to the GroES chaperonin family. Heptamer of 7 subunits arranged in a ring. Interacts with the chaperonin GroEL.

The protein resides in the cytoplasm. In terms of biological role, together with the chaperonin GroEL, plays an essential role in assisting protein folding. The GroEL-GroES system forms a nano-cage that allows encapsulation of the non-native substrate proteins and provides a physical environment optimized to promote and accelerate protein folding. GroES binds to the apical surface of the GroEL ring, thereby capping the opening of the GroEL channel. The protein is Co-chaperonin GroES of Syntrophotalea carbinolica (strain DSM 2380 / NBRC 103641 / GraBd1) (Pelobacter carbinolicus).